Reading from the N-terminus, the 670-residue chain is MYLLIVFLPLLGSSVAGFFGRFLGSEGTAIMTTTCVSFSSILSLIAFYEVALGASACYLRIAPWISSEMFDASWGFLFDSLTVVMLIVVTFISSLVHLYSISYMSEDPHSPRFMCYLSIFTFFMLMLVTGDNFLQLFLGWEGVGLASYLLIHFWFTRLQADKAAIKAMLVNRVGDFGLALGIFGCFTLFQTVDFSTIFACASAPRNEWIFCNMRLNAITLICILLFIGAVGKSAQIGLHTWLPDAMEGPTPVSALIHAATMVTAGVFMIARCSPLFEYSPTALIVITFAGAMTSFLAATTGILQNDLKRVIAYSTCSQLGYMIFACGISNYSVSVFHLMNHAFFKALLFLSAGSVIHAMSDEQDMRKMGGLASSFPLTYAMMLMGSLSLIGFPFLTGFYSKDVILELAYTKYTISGNFAFWLGSVSVLFTSYYSFRLLFLTFLVPTNSFGRDRLRCHDAPIPMAIPLILLALGSLFVGYLAKDMMIGLGTNFWANSPFVLPKNEILAESEFAAPTITKLIPILFSTSGASLAYNVNLVADQFQRAFQTSTFCNRLYSFFNKRWFFDQVLNDFLVRSFLRFGYSVSFEALDKGAIEILGPYGISYTFRRLAERISQLQSGSVYHYAFAMLLGSTPFVTFSRMWDSLSSWVDSRSSFILLVSSFLINKSSQE.

A run of 15 helical transmembrane segments spans residues 3–23 (LLIV…GRFL), 36–56 (VSFS…GASA), 76–96 (FLFD…SSLV), 113–133 (FMCY…GDNF), 136–156 (LFLG…FWFT), 178–198 (LALG…STIF), 218–238 (ITLI…QIGL), 250–270 (TPVS…FMIA), 283–303 (LIVI…TGIL), 319–339 (LGYM…FHLM), 340–360 (NHAF…HAMS), 375–395 (FPLT…FPFL), 425–445 (VSVL…FLVP), 461–481 (IPMA…GYLA), and 618–638 (SGSV…FVTF).

This sequence belongs to the complex I subunit 5 family.

Its subcellular location is the mitochondrion inner membrane. The enzyme catalyses a ubiquinone + NADH + 5 H(+)(in) = a ubiquinol + NAD(+) + 4 H(+)(out). Core subunit of the mitochondrial membrane respiratory chain NADH dehydrogenase (Complex I) that is believed to belong to the minimal assembly required for catalysis. Complex I functions in the transfer of electrons from NADH to the respiratory chain. The immediate electron acceptor for the enzyme is believed to be ubiquinone. The sequence is that of NADH-ubiquinone oxidoreductase chain 5 (ND5) from Triticum aestivum (Wheat).